The following is a 356-amino-acid chain: MKQKLEGVVQRYEDLTYKLGDPSVINNPTEYRQVAREHNRLGPIVEKFRAYQKTERELDDVLEMLEGPLDPEERALFNQELRDLKEKLQTLSDELRILLLPRDPNDDKNVIMEIRAGAGGDEASLFAAELFRMYTRLAERHKWKTEVLSISENEAGGIKEVLFQINAEGAYSRLKYEGGVHRVQRVPVTESQGRIHTSTVTVAVMPEMEEVDIEIKPEDLKIEVQRAGGAGGQHVNKTESAVRMTHLPTGIVVYCADERSQMQNREKALRVLRARVADYYAQQAKSEEEQLRRAQVGTGERSEKIRTYNFPQDRVTDHRIGLTVHNIAAVMDGEIDHIIDALAQHEQAALLAREEA.

At Gln233 the chain carries N5-methylglutamine.

Belongs to the prokaryotic/mitochondrial release factor family. Methylated by PrmC. Methylation increases the termination efficiency of RF1.

The protein resides in the cytoplasm. Its function is as follows. Peptide chain release factor 1 directs the termination of translation in response to the peptide chain termination codons UAG and UAA. The chain is Peptide chain release factor 1 from Symbiobacterium thermophilum (strain DSM 24528 / JCM 14929 / IAM 14863 / T).